The primary structure comprises 471 residues: 3-isopropylmalate dehydratase large subunit (471 aa).

[4Fe-4S] cluster is bound by residues cysteine 347, cysteine 407, and cysteine 410.

Belongs to the aconitase/IPM isomerase family. LeuC type 1 subfamily. Heterodimer of LeuC and LeuD. [4Fe-4S] cluster serves as cofactor.

It catalyses the reaction (2R,3S)-3-isopropylmalate = (2S)-2-isopropylmalate. Its pathway is amino-acid biosynthesis; L-leucine biosynthesis; L-leucine from 3-methyl-2-oxobutanoate: step 2/4. Catalyzes the isomerization between 2-isopropylmalate and 3-isopropylmalate, via the formation of 2-isopropylmaleate. The protein is 3-isopropylmalate dehydratase large subunit of Buchnera aphidicola subsp. Baizongia pistaciae (strain Bp).